Here is a 405-residue protein sequence, read N- to C-terminus: Tryptophan synthase beta chain (405 aa).

An N6-(pyridoxal phosphate)lysine modification is found at lysine 98.

Belongs to the TrpB family. As to quaternary structure, tetramer of two alpha and two beta chains. Pyridoxal 5'-phosphate is required as a cofactor.

It carries out the reaction (1S,2R)-1-C-(indol-3-yl)glycerol 3-phosphate + L-serine = D-glyceraldehyde 3-phosphate + L-tryptophan + H2O. It participates in amino-acid biosynthesis; L-tryptophan biosynthesis; L-tryptophan from chorismate: step 5/5. Functionally, the beta subunit is responsible for the synthesis of L-tryptophan from indole and L-serine. The polypeptide is Tryptophan synthase beta chain (Afipia carboxidovorans (strain ATCC 49405 / DSM 1227 / KCTC 32145 / OM5) (Oligotropha carboxidovorans)).